We begin with the raw amino-acid sequence, 651 residues long: Beta-glucuronidase (651 aa).

The N-terminal stretch at Met-1–Ala-22 is a signal peptide. Residues Asn-172 and Asn-419 are each glycosylated (N-linked (GlcNAc...) asparagine). The Proton donor role is filled by Glu-450. An N-linked (GlcNAc...) asparagine glycan is attached at Asn-630.

The protein belongs to the glycosyl hydrolase 2 family. Homotetramer.

The protein localises to the lysosome. It carries out the reaction a beta-D-glucuronoside + H2O = D-glucuronate + an alcohol. Its activity is regulated as follows. Inhibited by L-aspartic acid. Plays an important role in the degradation of dermatan and keratan sulfates. The sequence is that of Beta-glucuronidase (GUSB) from Felis catus (Cat).